Reading from the N-terminus, the 651-residue chain is Probable potassium transport system protein Kup (651 aa).

A run of 12 helical transmembrane segments spans residues 41 to 61 (LVLGALGVVYGDIGTSPIYAF), 82 to 102 (VVSLIFWALTLVVTVKYVLFV), 130 to 150 (LILGVGICGAALFFGDAVITP), 163 to 183 (IVAPNLTPFVVPATVVILVTL), 194 to 214 (VAIVFGPIMALWFVALGASGL), 235 to 255 (FLTVSPAVAFVTVGAVFLAMT), 276 to 296 (WLWIVFPCLLLNYFGQAAFIL), 309 to 329 (MIPSFALWPMVLLATAATVIA), 366 to 386 (IYIPRVNLLLGLAVVILVLGF), 395 to 415 (AYGIAVTGNMLVTTVLLYIVM), 426 to 446 (ALPIILGFLVIDMLFFSANII), and 450 to 470 (EGGWASIGIATVLVLIMWTWV).

The protein belongs to the HAK/KUP transporter (TC 2.A.72) family.

It is found in the cell inner membrane. It catalyses the reaction K(+)(in) + H(+)(in) = K(+)(out) + H(+)(out). Transport of potassium into the cell. Likely operates as a K(+):H(+) symporter. The chain is Probable potassium transport system protein Kup from Brucella canis (strain ATCC 23365 / NCTC 10854 / RM-666).